Reading from the N-terminus, the 345-residue chain is Serine proteinase inhibitor 2 (345 aa).

Belongs to the serpin family. Poxviruses subfamily.

It localises to the host cytoplasm. Functionally, viral serpin that inhibits both cysteine and serine proteinases involved in the regulation of host inflammatory and apoptosis processes. Major anti-apoptotic protein which inhibits both intrinsic and extrinsic pathways and strongly cleaves host CASP1 and CASP8 but is a rather poor inhibitor of host CASP3. Prevents the proteolytic activity of host interleukin-1-beta converting enzyme (ICE) and ICE-like enzymes. Can also block apoptosis through host tumor necrosis factor (TNF) receptor. The inhibition of host ICE is an example of a 'cross-class' interaction, in which a serpin inhibits a non-serine proteinase. Also inhibits granzyme B. The chain is Serine proteinase inhibitor 2 (OPG199) from Rabbitpox virus (strain Utrecht) (RPV).